Here is a 487-residue protein sequence, read N- to C-terminus: METVQLRNPPRRQLKKLDEDSLTKQPEEVFDVLEKLGEGSYGSVYKAIHKETGQIVAIKQVPVESDLQEIIKEISIMQQCDSPHVVKYYGSYFKNTDLWIVMEYCGAGSVSDIIRLRNKTLTEDEIATVLQSTLKGLEYLHFMRKIHRDIKAGNILLNTEGHAKLADFGVAGQLTDTMAKRNTVIGTPFWMAPEVIQEIGYNCVADIWSLGITAIEMAEGKPPYADIHPMRAIFMIPTNPPPTFRKPELWSDNFTDFVKQCLVKSPEQRATATQLLQHPFVKSAKGVSILRDLINEAMDVKLKRQESQQREVDQDDEENSEEDEMDSGTMVRAVGDEMGTVRVASTMTDGANTMIEHDDTLPSQLGTMVINTEDEEEEGTMKRRDETMQPAKPSFLEYFEQKEKENQINSFGKSVPGPLKNSSDWKIPQDGDYEFLKSWTVEDLQKRLLALDPMMEQEIEEIRQKYQSKRQPILDAIEAKKRRQQNF.

Met1 carries the N-acetylmethionine modification. Thr3 bears the Phosphothreonine mark. The 252-residue stretch at 30–281 folds into the Protein kinase domain; that stretch reads FDVLEKLGEG…ATQLLQHPFV (252 aa). Residues 36–44 and Lys59 contribute to the ATP site; that span reads LGEGSYGSV. Residue Asp149 is the Proton acceptor of the active site. Position 183 is a phosphothreonine; by autocatalysis (Thr183). Ser265 bears the Phosphoserine mark. Positions 290 to 310 form a coiled coil; that stretch reads LRDLINEAMDVKLKRQESQQR. Basic and acidic residues predominate over residues 303-312; sequence KRQESQQREV. The segment at 303 to 332 is disordered; it reads KRQESQQREVDQDDEENSEEDEMDSGTMVR. Acidic residues predominate over residues 313 to 326; that stretch reads DQDDEENSEEDEMD. Ser320 is subject to Phosphoserine. Thr340 and Thr367 each carry phosphothreonine. Thr387 is subject to Phosphothreonine; by PKB/AKT1. Residues Ser410 and Ser414 each carry the phosphoserine modification. Tyr433 carries the phosphotyrosine modification. The SARAH domain occupies 433–480; sequence YEFLKSWTVEDLQKRLLALDPMMEQEIEEIRQKYQSKRQPILDAIEAK.

It belongs to the protein kinase superfamily. STE Ser/Thr protein kinase family. STE20 subfamily. As to quaternary structure, homodimer; mediated via the coiled-coil region. Interacts with NORE1, which inhibits autoactivation. Interacts with and stabilizes SAV1. Interacts with RASSF1. Interacts with FOXO3. Interacts with RASSF2 (via SARAH domain). Interacts with AR, PKB/AKT1, TNNI3 and SIRT1. Interacts with DLG5 (via PDZ domain 3). Interacts with MARK3 and SCRIB in the presence of DLG5. Requires Mg(2+) as cofactor. Autophosphorylated on serine and threonine residues. Phosphorylation at Thr-387 by PKB/AKT1, leads to inhibition of its: kinase activity, nuclear translocation and autophosphorylation at Thr-183. It also diminishes its cleavage by caspases and its ability to phosphorylate FOXO3. In terms of processing, proteolytically cleaved by caspase-3 during apoptosis at Asp-326 and Asp-349 resulting in a 37 kDa or a 39 kDa subunit respectively. The 39 kDa subunit is further cleaved into the 37 kDa form. Proteolytic cleavage results in kinase activation and nuclear translocation of the truncated form (MST1/N). It is less likely that cleavage at Asp-349 is a prerequisite for activation as this site is not conserved in the murine ortholog.

The protein resides in the cytoplasm. Its subcellular location is the nucleus. The enzyme catalyses L-seryl-[protein] + ATP = O-phospho-L-seryl-[protein] + ADP + H(+). The catalysed reaction is L-threonyl-[protein] + ATP = O-phospho-L-threonyl-[protein] + ADP + H(+). Its activity is regulated as follows. Inhibited by the C-terminal non-catalytic region. Activated by caspase-cleavage. Full activation also requires homodimerization and autophosphorylation of Thr-183. Activated by RASSF1 which acts by preventing its dephosphorylation. Its function is as follows. Stress-activated, pro-apoptotic kinase which, following caspase-cleavage, enters the nucleus and induces chromatin condensation followed by internucleosomal DNA fragmentation. Key component of the Hippo signaling pathway which plays a pivotal role in organ size control and tumor suppression by restricting proliferation and promoting apoptosis. The core of this pathway is composed of a kinase cascade wherein STK3/MST2 and STK4/MST1, in complex with its regulatory protein SAV1, phosphorylates and activates LATS1/2 in complex with its regulatory protein MOB1, which in turn phosphorylates and inactivates YAP1 oncoprotein and WWTR1/TAZ. Phosphorylation of YAP1 by LATS2 inhibits its translocation into the nucleus to regulate cellular genes important for cell proliferation, cell death, and cell migration. STK3/MST2 and STK4/MST1 are required to repress proliferation of mature hepatocytes, to prevent activation of facultative adult liver stem cells (oval cells), and to inhibit tumor formation. Phosphorylates 'Ser-14' of histone H2B (H2BS14ph) during apoptosis. Phosphorylates FOXO3 upon oxidative stress, which results in its nuclear translocation and cell death initiation. Phosphorylates MOBKL1A, MOBKL1B and RASSF2. Phosphorylates TNNI3 (cardiac Tn-I) and alters its binding affinity to TNNC1 (cardiac Tn-C) and TNNT2 (cardiac Tn-T). Phosphorylates FOXO1 on 'Ser-212' and regulates its activation and stimulates transcription of PMAIP1 in a FOXO1-dependent manner. Phosphorylates SIRT1 and inhibits SIRT1-mediated p53/TP53 deacetylation, thereby promoting p53/TP53 dependent transcription and apoptosis upon DNA damage. Acts as an inhibitor of PKB/AKT1. Phosphorylates AR on 'Ser-650' and suppresses its activity by intersecting with PKB/AKT1 signaling and antagonizing formation of AR-chromatin complexes. This Colobus guereza (Mantled guereza) protein is Serine/threonine-protein kinase 4 (STK4).